The following is a 305-amino-acid chain: Methionyl-tRNA formyltransferase (305 aa).

111-114 (SLLP) serves as a coordination point for (6S)-5,6,7,8-tetrahydrofolate.

Belongs to the Fmt family.

It carries out the reaction L-methionyl-tRNA(fMet) + (6R)-10-formyltetrahydrofolate = N-formyl-L-methionyl-tRNA(fMet) + (6S)-5,6,7,8-tetrahydrofolate + H(+). Attaches a formyl group to the free amino group of methionyl-tRNA(fMet). The formyl group appears to play a dual role in the initiator identity of N-formylmethionyl-tRNA by promoting its recognition by IF2 and preventing the misappropriation of this tRNA by the elongation apparatus. This Helicobacter pylori (strain J99 / ATCC 700824) (Campylobacter pylori J99) protein is Methionyl-tRNA formyltransferase.